The following is a 667-amino-acid chain: DNA ligase (667 aa).

NAD(+) contacts are provided by residues 34–38 (DQEYD), 83–84 (SL), and Glu-114. The N6-AMP-lysine intermediate role is filled by Lys-116. Residues Arg-137, Glu-170, Lys-286, and Lys-310 each contribute to the NAD(+) site. The Zn(2+) site is built by Cys-404, Cys-407, Cys-422, and Cys-427. In terms of domain architecture, BRCT spans 588-667 (HLAQKFENYR…EFQQLLSKED (80 aa)).

It belongs to the NAD-dependent DNA ligase family. LigA subfamily. It depends on Mg(2+) as a cofactor. Requires Mn(2+) as cofactor.

It catalyses the reaction NAD(+) + (deoxyribonucleotide)n-3'-hydroxyl + 5'-phospho-(deoxyribonucleotide)m = (deoxyribonucleotide)n+m + AMP + beta-nicotinamide D-nucleotide.. In terms of biological role, DNA ligase that catalyzes the formation of phosphodiester linkages between 5'-phosphoryl and 3'-hydroxyl groups in double-stranded DNA using NAD as a coenzyme and as the energy source for the reaction. It is essential for DNA replication and repair of damaged DNA. This Spiroplasma citri protein is DNA ligase.